A 409-amino-acid chain; its full sequence is Inner membrane transport protein YqeG (409 aa).

The Periplasmic segment spans residues 1-25 (MSNIWSKEETLWSFALYGTAVGAGT). Residues 26–46 (LFLPIQLGSAGAVVLFITALV) traverse the membrane as a helical segment. The Cytoplasmic portion of the chain corresponds to 47 to 87 (AWPLTYWPHKALCQFILSSKTSAGEGITGAVTHYYGKKIGN). A helical membrane pass occupies residues 88–108 (LITTLYFIAFFVVVLIYAVAI). The Periplasmic portion of the chain corresponds to 109 to 127 (TNSLTEQLAKHMVIDLRIR). Residues 128 to 148 (MLVSLGVVLILNLIFLMGRHA) traverse the membrane as a helical segment. The Cytoplasmic portion of the chain corresponds to 149 to 151 (TIR). The helical transmembrane segment at 152–172 (VMGFLVFPLIAYFLFLSIYLV) threads the bilayer. The Periplasmic segment spans residues 173–193 (GSWQPDLLTTQVEFNQNTLHQ). The chain crosses the membrane as a helical span at residues 194–214 (IWISIPVMVFAFSHTPIISTF). Over 215 to 235 (AIDRREKYGEHAMDKCKKIMK) the chain is Cytoplasmic. The helical transmembrane segment at 236-256 (VAYLIICISVLFFVFSCLLSI) threads the bilayer. The Periplasmic portion of the chain corresponds to 257–276 (PPSYIEAAKEEGVTILSALS). The helical transmembrane segment at 277–297 (MLPNAPAWLSISGIIVAVVAM) threads the bilayer. The Cytoplasmic portion of the chain corresponds to 298-329 (SKSFLGTYFGVIEGATEVVKTTLQQVGVKKSR). Residues 330–350 (AFNRALSIMLVSLITFIVCCI) form a helical membrane-spanning segment. Topologically, residues 351–353 (NPN) are periplasmic. The chain crosses the membrane as a helical span at residues 354–374 (AISMIYAISGPLIAMILFIMP). At 375–388 (TLSTYLIPALKPWR) the chain is on the cytoplasmic side. The chain crosses the membrane as a helical span at residues 389-409 (SIGNLITLIVGILCVSVMFFS).

It belongs to the amino acid/polyamine transporter 2 family. SdaC/TdcC subfamily.

It localises to the cell inner membrane. The protein is Inner membrane transport protein YqeG (yqeG) of Escherichia coli O6:H1 (strain CFT073 / ATCC 700928 / UPEC).